We begin with the raw amino-acid sequence, 1332 residues long: Sister chromatid cohesion protein PDS5 homolog A (1332 aa).

Met-1 is modified (N-acetylmethionine). One copy of the HEAT repeat lies at 392–428 (ALVNDQLLGFVRERTLDKRWRVRKEAMMGLAQLYKKY). At Ser-1096 the chain carries Phosphoserine. The interval 1138-1332 (GVLGTVNKPL…PAERQIDLQR (195 aa)) is disordered. An N6-acetyllysine modification is found at Lys-1145. The span at 1160–1173 (GTETGSNINANSEL) shows a compositional bias: polar residues. Phosphoserine occurs at positions 1174 and 1194. At Thr-1207 the chain carries Phosphothreonine. Lys-1210 carries the N6-acetyllysine modification. Polar residues predominate over residues 1222–1232 (SDQSTQGNISS). Lys-1288 carries the post-translational modification N6-acetyllysine. Ser-1303 bears the Phosphoserine mark. Basic and acidic residues predominate over residues 1316–1332 (DGAKKAVPAERQIDLQR).

The protein belongs to the PDS5 family. As to quaternary structure, interacts with the cohesin complex. Interacts with WAPL (via FGF motifs) or CDCA5 (via the FGF motif); the interaction is direct, cohesin-dependent and competitive. Interacts with SMC3. Interacts with TP63.

It is found in the nucleus. Probable regulator of sister chromatid cohesion in mitosis which may stabilize cohesin complex association with chromatin. May couple sister chromatid cohesion during mitosis to DNA replication. Cohesion ensures that chromosome partitioning is accurate in both meiotic and mitotic cells and plays an important role in DNA repair. The sequence is that of Sister chromatid cohesion protein PDS5 homolog A (Pds5a) from Mus musculus (Mouse).